A 330-amino-acid polypeptide reads, in one-letter code: Aspartate--ammonia ligase (330 aa).

It belongs to the class-II aminoacyl-tRNA synthetase family. AsnA subfamily.

It localises to the cytoplasm. It carries out the reaction L-aspartate + NH4(+) + ATP = L-asparagine + AMP + diphosphate + H(+). It functions in the pathway amino-acid biosynthesis; L-asparagine biosynthesis; L-asparagine from L-aspartate (ammonia route): step 1/1. The chain is Aspartate--ammonia ligase from Escherichia coli O45:K1 (strain S88 / ExPEC).